The chain runs to 330 residues: MSKLQLSIAVGNYDRMRPLIDGDVQIDGVDPVFMLQDPEEIFFRAFRTADYDICELSLSSYSVKTAAGTSPYIAVPVFPSRAFRHSSVYVRADRGINSPADLKGKRIGVPEYQLTANVWVRMFLEEEYGVKASDIQWVRGGYEDPTRIEKISLKLPEGVSLVNAPEGRTISNLLADGEIDGVIGPRAPSCFDRGHPQVKYLFEDPQKAAAEWYERRKLFPIMHTLGVRKTLAEQHPWLPGALVKAFEHSKAVALTRLSDTSATKVTLPFIEDQLRNARRLMGQDFWSYGFAENAHVVDRFLARDHAEGLSSRRLQPAELFHPASLESFKI.

To P.putida DHP decarboxylase.

The enzyme catalyses 4,5-dihydroxyphthalate + H(+) = 3,4-dihydroxybenzoate + CO2. It functions in the pathway xenobiotic degradation; phthalate degradation; 3,4-dihydroxybenzoate from phthalate: step 3/3. The sequence is that of 4,5-dihydroxyphthalate decarboxylase (phtD) from Comamonas testosteroni (Pseudomonas testosteroni).